Reading from the N-terminus, the 449-residue chain is Interferon-related developmental regulator 1 (449 aa).

Basic residues predominate over residues 1–10 (MPKNKKRNAP). Positions 1-41 (MPKNKKRNAPHRGGGGGGGSGAATSAATTGGPHRTVQPFSD) are disordered. A compositionally biased stretch (gly residues) spans 12–21 (RGGGGGGGSG). Over residues 22–31 (AATSAATTGG) the composition is skewed to low complexity.

Belongs to the IFRD family. As to quaternary structure, interacts with PSIP1/LEDGF. Expressed at high levels in the embryonic brain in the period related to neuroblast proliferation and differentiation.

It localises to the cytoplasm. Its subcellular location is the cell membrane. It is found in the nucleus. Probably participates in neurogenesis. Could play a role in regulating gene activity in the proliferative and/or differentiative pathways induced by NGF. This is Interferon-related developmental regulator 1 (Ifrd1) from Rattus norvegicus (Rat).